The chain runs to 282 residues: Shikimate dehydrogenase (NADP(+)) (282 aa).

Shikimate-binding positions include 18–20 (SRS) and T65. K69 functions as the Proton acceptor in the catalytic mechanism. Residues N90 and D106 each contribute to the shikimate site. Residues 134 to 138 (GAGGA), 158 to 163 (NRTAAR), and I223 contribute to the NADP(+) site. A shikimate-binding site is contributed by Y225. An NADP(+)-binding site is contributed by G246.

It belongs to the shikimate dehydrogenase family. In terms of assembly, homodimer.

It catalyses the reaction shikimate + NADP(+) = 3-dehydroshikimate + NADPH + H(+). It participates in metabolic intermediate biosynthesis; chorismate biosynthesis; chorismate from D-erythrose 4-phosphate and phosphoenolpyruvate: step 4/7. Involved in the biosynthesis of the chorismate, which leads to the biosynthesis of aromatic amino acids. Catalyzes the reversible NADPH linked reduction of 3-dehydroshikimate (DHSA) to yield shikimate (SA). The protein is Shikimate dehydrogenase (NADP(+)) of Methylobacterium radiotolerans (strain ATCC 27329 / DSM 1819 / JCM 2831 / NBRC 15690 / NCIMB 10815 / 0-1).